The sequence spans 454 residues: DNA-binding protein BIN4 (454 aa).

Disordered regions lie at residues 24 to 53 (LLSLSSSDDDSPYRESEVISSLPLPDDDGD), 103 to 249 (AGKE…DKDT), and 380 to 454 (TFES…KAKK). Residues 112–123 (DCEKLSSKHKDA) are compositionally biased toward basic and acidic residues. A compositionally biased stretch (polar residues) spans 132-150 (LVSSDSEPSSPIKQEVTVS). Positions 229 to 249 (TPKEENCAQEILKTEDKDKDT) are enriched in basic and acidic residues. The segment covering 438–454 (PAKKARNSAPKKPKAKK) has biased composition (basic residues).

As to quaternary structure, interacts with TOP6A, RHL1 and itself, but not with TOP6B. Expressed in expanding cotyledons, vascular cells, elongating root cells, developing leaf trichomes, root and apical meristems and lateral root primordia.

The protein resides in the nucleus. Its function is as follows. Component of the DNA topoisomerase VI complex. Binds to DNA. Required for chromatin organization and progression of endoreduplication cycles. The loss of BIN4 activates the ATM- and ATR-dependent DNA damage responses in postmitotic cells and induces the ectopic expression of the mitotic G2/M-specific cyclin B1;1 gene in non-dividing cells. The sequence is that of DNA-binding protein BIN4 (BIN4) from Arabidopsis thaliana (Mouse-ear cress).